A 353-amino-acid chain; its full sequence is UDP-galactose transporter (353 aa).

Helical transmembrane passes span 147–167, 184–204, 215–235, 254–274, 279–299, and 302–322; these read LGPMKWFSLFLLTGGIAIVQL, VTGFSAVLVACLISGLAGVYF, LWVRNVQLSFFSLFPCLFTIL, IVWLAILLQAGGGIIVALCVA, IMKNFSTSISIIISSLASVYL, and FKISLTFLIGVMLVIAATFLY. The segment at 325–353 is disordered; the sequence is PESKPSPSRGTYIPMTTQDAAAKDVDHKH. Polar residues predominate over residues 329–343; that stretch reads PSPSRGTYIPMTTQD.

The protein belongs to the nucleotide-sugar transporter family. SLC35A subfamily.

It is found in the golgi apparatus membrane. Functionally, essential for the transport of UDP-galactose into the lumen of Golgi apparatus. In Schizosaccharomyces pombe (strain 972 / ATCC 24843) (Fission yeast), this protein is UDP-galactose transporter (gms1).